Consider the following 1074-residue polypeptide: Phospholipase D1 (1074 aa).

One can recognise a PX domain in the interval 81–212; the sequence is IKAQVLEVER…TEFLDVSQLS (132 aa). Positions 219–328 constitute a PH domain; the sequence is PKGLEGMIMK…WGGAIEEFIR (110 aa). Residues Cys240 and Cys241 are each lipidated (S-palmitoyl cysteine). The PLD phosphodiesterase 1 domain occupies 459-486; the sequence is YLWAHHEKLVIIDQSVAFVGGIDLAYGR. A catalytic region spans residues 463–928; the sequence is HHEKLVIIDQ…MLGKRDSEMA (466 aa). Phosphoserine is present on residues Ser499, Ser561, and Ser629. One can recognise a PLD phosphodiesterase 2 domain in the interval 891 to 918; that stretch reads ELIYVHSKLLIADDNTVIIGSANINDRS.

It belongs to the phospholipase D family. As to quaternary structure, interacts with PIP5K1B. In terms of tissue distribution, expressed in kidney, lung, and at a much lower levels, in brain, liver, heart, testis and spleen.

Its subcellular location is the cytoplasm. It is found in the perinuclear region. The protein localises to the endoplasmic reticulum membrane. The protein resides in the golgi apparatus membrane. It localises to the late endosome membrane. It catalyses the reaction a 1,2-diacyl-sn-glycero-3-phosphocholine + H2O = a 1,2-diacyl-sn-glycero-3-phosphate + choline + H(+). It carries out the reaction ethanol + a 1,2-diacyl-sn-glycero-3-phosphocholine = 1,2-diacyl-sn-glycero-3-phosphoethanol + choline. The catalysed reaction is 1,2-dihexadecanoyl-sn-glycero-3-phosphocholine + H2O = 1,2-dihexadecanoyl-sn-glycero-3-phosphate + choline + H(+). Stimulated by phosphatidylinositol 4,5-bisphosphate and phosphatidylinositol 3,4,5-trisphosphate, activated by the phosphokinase C-alpha, by the ADP-ribosylation factor-1 (ARF-1), and to a lesser extent by GTP-binding proteins: RHO A, RAC-1 and CDC42. Inhibited by oleate. In terms of biological role, function as phospholipase selectivefor phosphatidylcholine. Implicated as a critical step in numerous cellular pathways, including signal transduction, membrane trafficking, and the regulation of mitosis. May be involved in the regulation of perinuclear intravesicular membrane traffic. The polypeptide is Phospholipase D1 (Mus musculus (Mouse)).